A 271-amino-acid chain; its full sequence is MQKKYYKNHVIQKKWGQIFLKDQNIIHSIISILNLKKYQNVIEIGPGLGALTKPISDIIDFLILIERDPNLVNRLLHTFTSKKVKIFNKDAMTIDFSKLLTNPNQKIRLIGNLPYNISTKLIIHLYKYINIIHDMHFMLQKEVAQRIVAQPNNKAYGRLSIFAQYYCKVQALLEVPKKSFIPIPKVESMIVQFIPYHTNNPYPTVNISLLSLLTKFAFHQRRKIIHNSLSSLLNSTEIIQCGINTESRAENLTIQQFCKLTTILHHKYNLN.

S-adenosyl-L-methionine-binding residues include L20, G45, E66, D90, and N112.

Belongs to the class I-like SAM-binding methyltransferase superfamily. rRNA adenine N(6)-methyltransferase family. RsmA subfamily.

It is found in the cytoplasm. The enzyme catalyses adenosine(1518)/adenosine(1519) in 16S rRNA + 4 S-adenosyl-L-methionine = N(6)-dimethyladenosine(1518)/N(6)-dimethyladenosine(1519) in 16S rRNA + 4 S-adenosyl-L-homocysteine + 4 H(+). Functionally, specifically dimethylates two adjacent adenosines (A1518 and A1519) in the loop of a conserved hairpin near the 3'-end of 16S rRNA in the 30S particle. May play a critical role in biogenesis of 30S subunits. This Blochmanniella floridana protein is Ribosomal RNA small subunit methyltransferase A.